Here is a 266-residue protein sequence, read N- to C-terminus: MHDLATIILLGIIEGLTEFLPVSSTGHLILASEMLGFTGEGSAAFKIAIQLGAILAVLVAYRARFWGVGMGLLRADPAAVAFTRNILIGFLPAMLVGAVAYEGVRALLESPATVAVALLVGGIAILAIERMVKVVKVESVEAMPLRTAIAIGAVQCIAMIPGVSRSGATIMGALLMGVERRTAAEFSFFLAVPTMMGATAYSLWKDRAILTFDDMNAIAIGLFVAFLVALVVVKAFVAIVGRFGFAPFAWYRIIVGGGALLWLAWK.

A run of 8 helical transmembrane segments spans residues 4–24 (LATIILLGIIEGLTEFLPVSS), 41–61 (GSAAFKIAIQLGAILAVLVAY), 79–99 (AVAFTRNILIGFLPAMLVGAV), 108–128 (LESPATVAVALLVGGIAILAI), 143–163 (MPLRTAIAIGAVQCIAMIPGV), 184–204 (AEFSFFLAVPTMMGATAYSLW), 220–240 (IGLFVAFLVALVVVKAFVAIV), and 243–263 (FGFAPFAWYRIIVGGGALLWL).

It belongs to the UppP family.

The protein localises to the cell inner membrane. It catalyses the reaction di-trans,octa-cis-undecaprenyl diphosphate + H2O = di-trans,octa-cis-undecaprenyl phosphate + phosphate + H(+). In terms of biological role, catalyzes the dephosphorylation of undecaprenyl diphosphate (UPP). Confers resistance to bacitracin. This Sphingopyxis alaskensis (strain DSM 13593 / LMG 18877 / RB2256) (Sphingomonas alaskensis) protein is Undecaprenyl-diphosphatase.